Consider the following 324-residue polypeptide: tRNA uridine(34) hydroxylase (324 aa).

Residues 145-239 (NDKKTIFIDM…YVHDARKNGL (95 aa)) enclose the Rhodanese domain. Catalysis depends on Cys-199, which acts as the Cysteine persulfide intermediate.

The protein belongs to the TrhO family.

It carries out the reaction uridine(34) in tRNA + AH2 + O2 = 5-hydroxyuridine(34) in tRNA + A + H2O. Functionally, catalyzes oxygen-dependent 5-hydroxyuridine (ho5U) modification at position 34 in tRNAs. This Buchnera aphidicola subsp. Acyrthosiphon pisum (strain APS) (Acyrthosiphon pisum symbiotic bacterium) protein is tRNA uridine(34) hydroxylase.